Consider the following 469-residue polypeptide: Putative dipeptidase SAB1611c (469 aa).

A Zn(2+)-binding site is contributed by His-84. Residue Asp-86 is part of the active site. Asp-115 is a Zn(2+) binding site. Glu-149 acts as the Proton acceptor in catalysis. Zn(2+) is bound by residues Glu-150, Asp-173, and His-440.

It belongs to the peptidase M20A family. The cofactor is Zn(2+).

This Staphylococcus aureus (strain bovine RF122 / ET3-1) protein is Putative dipeptidase SAB1611c.